Consider the following 404-residue polypeptide: MILDATPIITSLLDTDAYKLHMQQAVYHHYSDIPVVAEFRCRSDERLGEYATTLRHQVDMMADLSLTNEEFGYLQSLPFFKNDYLQWFKHFRFKPEQVHIATTADNQLTIKITGPWREVILWEVPLLALVSEIVHRARSPQITADDAVIQLRKLIDIFYRDAAEQQIDLADFKLMDFGTRRRFSYDVQRAIVDELKNHFPYLIGTSNYHFAERMQLAPVGTQAHEWFQAHQQISPELANSQRAALQSWLDEYPDQLGIALTDCITMDAFLRDFDMPFASRYQGLRHDSGDPIEWGEKAIAHYEKLGIDPMSKVLVFSDSLDFQKALVLYKHFHKRIRLIFGIGTRLTCNIPNITPLNIVIKLVECNGKPVAKLSDSPGKTICEDDEFVDKLRKAFDVPLVRQAC.

His-224 is subject to Phosphohistidine; by autocatalysis.

This sequence belongs to the NAPRTase family. In terms of processing, transiently phosphorylated on a His residue during the reaction cycle. Phosphorylation strongly increases the affinity for substrates and increases the rate of nicotinate D-ribonucleotide production. Dephosphorylation regenerates the low-affinity form of the enzyme, leading to product release.

The catalysed reaction is nicotinate + 5-phospho-alpha-D-ribose 1-diphosphate + ATP + H2O = nicotinate beta-D-ribonucleotide + ADP + phosphate + diphosphate. Its pathway is cofactor biosynthesis; NAD(+) biosynthesis; nicotinate D-ribonucleotide from nicotinate: step 1/1. In terms of biological role, catalyzes the synthesis of beta-nicotinate D-ribonucleotide from nicotinate and 5-phospho-D-ribose 1-phosphate at the expense of ATP. This is Nicotinate phosphoribosyltransferase from Proteus mirabilis (strain HI4320).